A 205-amino-acid polypeptide reads, in one-letter code: Large ribosomal subunit protein uL4 (205 aa).

Residues 65 to 99 (RQKGTGGARHGSRKSPTFRHGGVYKGPTPRSHGHD) form a disordered region.

It belongs to the universal ribosomal protein uL4 family. Part of the 50S ribosomal subunit.

Its function is as follows. One of the primary rRNA binding proteins, this protein initially binds near the 5'-end of the 23S rRNA. It is important during the early stages of 50S assembly. It makes multiple contacts with different domains of the 23S rRNA in the assembled 50S subunit and ribosome. In terms of biological role, forms part of the polypeptide exit tunnel. This is Large ribosomal subunit protein uL4 from Ruegeria pomeroyi (strain ATCC 700808 / DSM 15171 / DSS-3) (Silicibacter pomeroyi).